A 274-amino-acid polypeptide reads, in one-letter code: Rhamnulose-1-phosphate aldolase (274 aa).

Glutamate 117 is a catalytic residue. Zn(2+) contacts are provided by histidine 141, histidine 143, and histidine 212.

The protein belongs to the aldolase class II family. RhaD subfamily. Homotetramer. The cofactor is Zn(2+).

The protein resides in the cytoplasm. It catalyses the reaction L-rhamnulose 1-phosphate = (S)-lactaldehyde + dihydroxyacetone phosphate. It participates in carbohydrate degradation; L-rhamnose degradation; glycerone phosphate from L-rhamnose: step 3/3. Catalyzes the reversible cleavage of L-rhamnulose-1-phosphate to dihydroxyacetone phosphate (DHAP) and L-lactaldehyde. The chain is Rhamnulose-1-phosphate aldolase from Escherichia coli O45:K1 (strain S88 / ExPEC).